Consider the following 1047-residue polypeptide: uncharacterized protein (1047 aa).

An N6-acetyllysine modification is found at Lys-17. Disordered stretches follow at residues 172 to 208 (PPCS…GSFS) and 236 to 283 (RNSK…PQAL). Phosphoserine is present on Ser-208. Residues 237-254 (NSKQAMSEGPSSPWTQLA) are compositionally biased toward polar residues. Over residues 268–283 (HYPPPHHPPPHPPQAL) the composition is skewed to pro residues. Residues Ser-299 and Ser-391 each carry the phosphoserine modification. Thr-397 carries the post-translational modification Phosphothreonine. Disordered stretches follow at residues 448-469 (EKLQ…DSPV), 482-504 (ECQS…PVID), 519-567 (PAPE…LRGS), 668-690 (PSTP…GPIG), 714-763 (VAVA…GDSL), 931-1004 (EAGA…TLKA), and 1021-1047 (PTWG…SHHL). A phosphoserine mark is found at Ser-455, Ser-496, and Ser-497. Composition is skewed to low complexity over residues 729–741 (PARA…ARDP) and 751–762 (PAPASTSAPGDS). A phosphoserine mark is found at Ser-936, Ser-956, Ser-988, and Ser-996. Low complexity predominate over residues 978–996 (AAAGEESCGASPTPATSAS).

This is an uncharacterized protein from Homo sapiens (Human).